We begin with the raw amino-acid sequence, 97 residues long: Co-chaperonin GroES (97 aa).

Belongs to the GroES chaperonin family. Heptamer of 7 subunits arranged in a ring. Interacts with the chaperonin GroEL.

The protein resides in the cytoplasm. Its function is as follows. Together with the chaperonin GroEL, plays an essential role in assisting protein folding. The GroEL-GroES system forms a nano-cage that allows encapsulation of the non-native substrate proteins and provides a physical environment optimized to promote and accelerate protein folding. GroES binds to the apical surface of the GroEL ring, thereby capping the opening of the GroEL channel. This Nocardioides sp. (strain ATCC BAA-499 / JS614) protein is Co-chaperonin GroES.